Consider the following 1046-residue polypeptide: Nuclear pore complex protein NUP96 (1046 aa).

Residues 51–187 enclose the Peptidase S59 domain; sequence SPDYFLKPCI…GLWKFFVPHF (137 aa). Residues 283–295 are compositionally biased toward polar residues; that stretch reads RNVRPSQKIAQRN. The segment at 283–304 is disordered; sequence RNVRPSQKIAQRNSHQDPPPVV. Position 523 is a phosphoserine (Ser-523).

As to quaternary structure, part of the nuclear pore complex (NPC). The NPC has an eight-fold symmetrical structure comprising a central transport channel and two rings, the cytoplasmic and nuclear rings, to which eight filaments are attached. The cytoplasmic filaments have loose ends, while the nuclear filaments are joined in a distal ring, forming a nuclear basket. NPCs are highly dynamic in configuration and composition, and can be devided in 3 subcomplexes, the NUP62 subcomplex, the NUP107-160 subcomplex and the NUP93 subcomplex, containing approximately 30 different nucleoporin proteins. In terms of tissue distribution, expressed in roots, leaves, stems, flowers and siliques.

It localises to the nucleus membrane. It is found in the nucleus. Its subcellular location is the nuclear pore complex. Functionally, contributes to the transfer of mature mRNA from the nucleus to the cytosol. Required for both R gene-mediated and basal disease resistance. RNA export seems to play a critical role in stress responses and regulation of plant growth and development. This Arabidopsis thaliana (Mouse-ear cress) protein is Nuclear pore complex protein NUP96.